A 426-amino-acid chain; its full sequence is DNA primase DnaG (426 aa).

In terms of domain architecture, Toprim spans aspartate 165 to proline 241. Positions 171, 215, and 217 each coordinate Mg(2+). The segment at proline 278–glutamine 298 is disordered. Residues glutamine 285–valine 294 show a composition bias toward pro residues.

Belongs to the archaeal DnaG primase family. In terms of assembly, forms a ternary complex with MCM helicase and DNA. Component of the archaeal exosome complex. It depends on Mg(2+) as a cofactor.

The catalysed reaction is ssDNA + n NTP = ssDNA/pppN(pN)n-1 hybrid + (n-1) diphosphate.. RNA polymerase that catalyzes the synthesis of short RNA molecules used as primers for DNA polymerase during DNA replication. Also part of the exosome, which is a complex involved in RNA degradation. Acts as a poly(A)-binding protein that enhances the interaction between heteromeric, adenine-rich transcripts and the exosome. This chain is DNA primase DnaG, found in Hyperthermus butylicus (strain DSM 5456 / JCM 9403 / PLM1-5).